A 310-amino-acid chain; its full sequence is Thioredoxin reductase (310 aa).

An FAD-binding site is contributed by 34 to 41 (NGMQPGGQ). A disulfide bond links Cys135 and Cys138. Position 281–290 (281–290 (DVQDKIYRQA)) interacts with FAD.

The protein belongs to the class-II pyridine nucleotide-disulfide oxidoreductase family. In terms of assembly, homodimer. It depends on FAD as a cofactor.

It is found in the cytoplasm. It catalyses the reaction [thioredoxin]-dithiol + NADP(+) = [thioredoxin]-disulfide + NADPH + H(+). The sequence is that of Thioredoxin reductase (trxB) from Rickettsia conorii (strain ATCC VR-613 / Malish 7).